Consider the following 602-residue polypeptide: UvrABC system protein C (602 aa).

In terms of domain architecture, GIY-YIG spans 17–94; that stretch reads TTSGCYKMYS…IKEYKPDYNI (78 aa). The UVR domain maps to 199–234; sequence SKLLDETEIKMKEAIKKEDFEAAIKLKETKRSLIEI.

The protein belongs to the UvrC family. In terms of assembly, interacts with UvrB in an incision complex.

The protein resides in the cytoplasm. The UvrABC repair system catalyzes the recognition and processing of DNA lesions. UvrC both incises the 5' and 3' sides of the lesion. The N-terminal half is responsible for the 3' incision and the C-terminal half is responsible for the 5' incision. The protein is UvrABC system protein C of Borrelia hermsii (strain HS1 / DAH).